A 515-amino-acid polypeptide reads, in one-letter code: Fatty acyl-CoA reductase 1 (515 aa).

Over 1 to 465 the chain is Cytoplasmic; it reads MVSIPEYYEG…ARKHLNKLRN (465 aa). The chain crosses the membrane as a helical span at residues 466–483; sequence IRYGFNTILVILIWRIFI. The Peroxisomal segment spans residues 484–515; it reads ARSQMARNIWYFVVSLCYKFLSYFRASSTMRY.

This sequence belongs to the fatty acyl-CoA reductase family.

It localises to the peroxisome membrane. It catalyses the reaction a long-chain fatty acyl-CoA + 2 NADPH + 2 H(+) = a long-chain primary fatty alcohol + 2 NADP(+) + CoA. The enzyme catalyses hexadecanoyl-CoA + 2 NADPH + 2 H(+) = hexadecan-1-ol + 2 NADP(+) + CoA. It carries out the reaction octadecanoyl-CoA + 2 NADPH + 2 H(+) = octadecan-1-ol + 2 NADP(+) + CoA. The catalysed reaction is (9Z)-octadecenoyl-CoA + 2 NADPH + 2 H(+) = (9Z)-octadecen-1-ol + 2 NADP(+) + CoA. It catalyses the reaction (9Z,12Z)-octadecadienoyl-CoA + 2 NADPH + 2 H(+) = (9Z,12Z)-octadecadien-1-ol + 2 NADP(+) + CoA. The enzyme catalyses eicosanoyl-CoA + 2 NADPH + 2 H(+) = eicosan-1-ol + 2 NADP(+) + CoA. It carries out the reaction 16-methylheptadecanoyl-CoA + 2 NADPH + 2 H(+) = 16-methylheptadecan-1-ol + 2 NADP(+) + CoA. The catalysed reaction is 18-methylnonadecanoyl-CoA + 2 NADPH + 2 H(+) = 18-methylnonadecan-1-ol + 2 NADP(+) + CoA. Its function is as follows. Catalyzes the reduction of saturated and unsaturated C16 or C18 fatty acyl-CoA to fatty alcohols. It plays an essential role in the production of ether lipids/plasmalogens which synthesis requires fatty alcohols. In parallel, it is also required for wax monoesters production since fatty alcohols also constitute a substrate for their synthesis. This Gallus gallus (Chicken) protein is Fatty acyl-CoA reductase 1.